A 912-amino-acid polypeptide reads, in one-letter code: Probable dipeptidyl-aminopeptidase B (912 aa).

Basic and acidic residues predominate over residues methionine 1–aspartate 25. 2 disordered regions span residues methionine 1 to histidine 31 and glycine 49 to glycine 70. At methionine 1–lysine 92 the chain is on the cytoplasmic side. The chain crosses the membrane as a helical; Signal-anchor for type II membrane protein span at residues isoleucine 93–phenylalanine 113. Residues leucine 114–isoleucine 912 lie on the Vacuolar side of the membrane. N-linked (GlcNAc...) asparagine glycans are attached at residues asparagine 130, asparagine 210, asparagine 346, asparagine 569, and asparagine 656. Serine 751 acts as the Charge relay system in catalysis. A glycan (N-linked (GlcNAc...) asparagine) is linked at asparagine 810. Residues aspartate 828 and histidine 861 each act as charge relay system in the active site. Asparagine 897 is a glycosylation site (N-linked (GlcNAc...) asparagine).

Belongs to the peptidase S9B family.

Its subcellular location is the vacuole membrane. The enzyme catalyses Release of an N-terminal dipeptide, Xaa-Yaa-|-Zaa-, from a polypeptide, preferentially when Yaa is Pro, provided Zaa is neither Pro nor hydroxyproline.. Type IV dipeptidyl-peptidase which removes N-terminal dipeptides sequentially from polypeptides having unsubstituted N-termini provided that the penultimate residue is proline. This Paracoccidioides lutzii (strain ATCC MYA-826 / Pb01) (Paracoccidioides brasiliensis) protein is Probable dipeptidyl-aminopeptidase B (DAPB).